A 247-amino-acid chain; its full sequence is Virulence plasmid protein pGP6-D (247 aa).

It belongs to the UPF0137 (pGP6-D) family.

The polypeptide is Virulence plasmid protein pGP6-D (Chlamydia trachomatis).